Reading from the N-terminus, the 148-residue chain is UPF0756 membrane protein ETA_17460 (148 aa).

Transmembrane regions (helical) follow at residues 14–34 (ALSYFSHNITVTIALLVLIVI), 51–71 (MTVGIIILTIGVMAPIASGTI), 80–100 (FLHWKSLTAIAIGIFVSWLGG), and 112–132 (VVGGLLIGTIIGVSLFRGVPV).

This sequence belongs to the UPF0756 family.

Its subcellular location is the cell membrane. The polypeptide is UPF0756 membrane protein ETA_17460 (Erwinia tasmaniensis (strain DSM 17950 / CFBP 7177 / CIP 109463 / NCPPB 4357 / Et1/99)).